Consider the following 251-residue polypeptide: Bidirectional sugar transporter SWEET4 (251 aa).

Topologically, residues 1–12 (MVNATVARNIAG) are extracellular. Asn3 is a glycosylation site (N-linked (GlcNAc...) asparagine). The MtN3/slv 1 domain occupies 12–96 (GICGNVISLF…LAIFFFFSPT (85 aa)). Residues 13-33 (ICGNVISLFLFLSPIPTFITI) traverse the membrane as a helical segment. Over 34–45 (YKKKKVEEYKAD) the chain is Cytoplasmic. Residues 46 to 66 (PYLATVLNCALWVFYGLPMVQ) traverse the membrane as a helical segment. Over 67–72 (PDSLLV) the chain is Extracellular. The helical transmembrane segment at 73–93 (ITINGTGLAIELVYLAIFFFF) threads the bilayer. Residues 94–103 (SPTSRKVKVG) are Cytoplasmic-facing. The helical transmembrane segment at 104-124 (LWLIGEMVFVGIVATCTLLLF) threads the bilayer. The Extracellular portion of the chain corresponds to 125-132 (HTHNQRSS). Residues 133–153 (FVGIFCVIFVSLMYIAPLTIM) traverse the membrane as a helical segment. One can recognise a MtN3/slv 2 domain in the interval 133–216 (FVGIFCVIFV…LILYACYYKT (84 aa)). Over 154–163 (SKVIKTKSVK) the chain is Cytoplasmic. Residues 164 to 186 (YMPFSLSLANFLNGVVWVIYALI) form a helical membrane-spanning segment. The Extracellular segment spans residues 187–190 (KFDL). Residues 191-213 (FILIGNGLGTVSGAVQLILYACY) form a helical membrane-spanning segment. Residues 214-251 (YKTTPKDDEDEEDEENLSKVNSQLQLSGNSGQAKRVSA) lie on the Cytoplasmic side of the membrane. A disordered region spans residues 220–251 (DDEDEEDEENLSKVNSQLQLSGNSGQAKRVSA). Polar residues predominate over residues 231–245 (SKVNSQLQLSGNSGQ).

The protein belongs to the SWEET sugar transporter family. As to quaternary structure, forms homooligomers and heterooligomers with SWEET8 and SWEET17.

It is found in the cell membrane. Its function is as follows. Mediates both low-affinity uptake and efflux of sugar across the plasma membrane. In Arabidopsis thaliana (Mouse-ear cress), this protein is Bidirectional sugar transporter SWEET4.